The sequence spans 640 residues: Auxin efflux carrier component 3 (640 aa).

The Extracellular portion of the chain corresponds to 1–7 (MISWHDL). A helical membrane pass occupies residues 8–28 (YTVLTAVIPLYVAMILAYGSV). Residues 29-38 (RWWKIFSPDQ) are Cytoplasmic-facing. Residues 39 to 59 (CSGINRFVAIFAVPLLSFHFI) traverse the membrane as a helical segment. Residue Val51 participates in (indol-3-yl)acetate binding. Over 60–71 (STNNPYAMNLRF) the chain is Extracellular. Residues 72–92 (IAADTLQKIIMLSLLVLWANF) form a helical membrane-spanning segment. Over 93–101 (TRSGSLEWS) the chain is Cytoplasmic. A helical membrane pass occupies residues 102–122 (ITIFSLSTLPNTLVMGIPLLI). Residues Asn112 and Leu114 each contribute to the (indol-3-yl)acetate site. Residues 123 to 131 (AMYGEYSGS) are Extracellular-facing. The chain crosses the membrane as a helical span at residues 132-152 (LMVQIVVLQCIIWYTLLLFLF). Tyr145 lines the (indol-3-yl)acetate pocket. At 153–500 (EFRGAKMLIM…LIRNPNTYSS (348 aa)) the chain is on the cytoplasmic side. Phosphoserine occurs at positions 226, 243, and 283. The interval 310–351 (APNPEFSSTTTSTANKSVNKNPKDVNTNQQTTLPTGGKSNSH) is disordered. The span at 314-348 (EFSSTTTSTANKSVNKNPKDVNTNQQTTLPTGGKS) shows a compositional bias: polar residues. Thr322 is modified (phosphothreonine). Position 366 is a phosphoserine (Ser366). 2 disordered regions span residues 372–391 (AGLN…RSDQ) and 404–471 (SHNG…SQRK). The span at 430–442 (GKEEEAERPKDAE) shows a compositional bias: basic and acidic residues. The segment covering 449-460 (APNSTAALQSKT) has biased composition (polar residues). Residues 501–521 (LIGLIWALVAFRWHVAMPKII) traverse the membrane as a helical segment. Residues 522 to 524 (QQS) lie on the Extracellular side of the membrane. A helical membrane pass occupies residues 525–545 (ISILSDAGLGMAMFSLGLFMA). Over 546–559 (LQPKLIACGNSVAT) the chain is Cytoplasmic. Residues 560-580 (FAMAVRFLTGPAVMAVAAIAI) form a helical membrane-spanning segment. Residues 581–585 (GLRGD) lie on the Extracellular side of the membrane. Residues 586–606 (LLRVAIVQAALPQGIVPFVFA) traverse the membrane as a helical segment. Ile600 and Val601 together coordinate (indol-3-yl)acetate. Over 607–619 (KEYNVHPAILSTG) the chain is Cytoplasmic. The helical transmembrane segment at 620 to 640 (VIFGMLIALPITLVYYILLGL) threads the bilayer.

It belongs to the auxin efflux carrier (TC 2.A.69.1) family. Homodimer. As to expression, predominantly expressed at the lateral side of shoot endodermis cells as well as root pericycle and columella cells.

It is found in the cell membrane. Auxin efflux carrier activity is competitively inhibited by naptalamate (N-1-naphthylphthalamic acid, NPA). Functionally, acts as a component of the auxin efflux carrier; this activity is enhanced when activated by PID-mediated phosphorylation. Seems to be involved in the lateral auxin transport system. Together with PIN4 and PIN7, involved in the connective auxin transport (CAT) that ensures communication across the shoot system, and modulates strigolactone-mediated shoot branching control. Binds auxins including indole-3-acetic acid (IAA). Coordinated polar localization of PIN3 is directly regulated by the vesicle trafficking process. The protein is Auxin efflux carrier component 3 of Arabidopsis thaliana (Mouse-ear cress).